The sequence spans 448 residues: MREIVHLQTGQCGNQIGAAFWQTISGEHGLDGSGVYNGSSDLQLERMNVYFNEASGNKYVPRAVLVDLEPGTMDAVRAGPFGQLFRPDNFVFGQSGAGNNWAKGHYTEGAELVDQVVDVVRREAEGCDCLQGFQITHSLGGGTGAGMGTLLISKIREEFPDRMMATFSVVPSPKVSDTVVEPYNATLSVHQLVEHSDETFCIDNEALYDICMRTLKLSNPSYGDLNHLVSAVMSGVTTCLRFPGQLNSDLRKLAVNMVPFPRLHFFMVGFAPLTSRGAHSFRAVSVPELTQQMFDPKNMMAASDFRNGRYLTCSAIFRGKVSMKEVEDQMRNIQSKNQTYFVEWIPNNIQTALCSIPPRGLKMSSTFIGNSTSIQELFKRVGDQFTAMFRRKAFLHWYTGEGMDEMEFTEAESNMNDLVSEYQQYQDASISEGEEEYLEEEEPLEHEE.

8 residues coordinate GTP: Gln11, Glu69, Ser138, Gly142, Thr143, Gly144, Asn204, and Asn226. Glu69 serves as a coordination point for Mg(2+). A disordered region spans residues 425–448 (YQDASISEGEEEYLEEEEPLEHEE). Acidic residues predominate over residues 432 to 448 (EGEEEYLEEEEPLEHEE).

It belongs to the tubulin family. As to quaternary structure, dimer of alpha and beta chains. A typical microtubule is a hollow water-filled tube with an outer diameter of 25 nm and an inner diameter of 15 nM. Alpha-beta heterodimers associate head-to-tail to form protofilaments running lengthwise along the microtubule wall with the beta-tubulin subunit facing the microtubule plus end conferring a structural polarity. Microtubules usually have 13 protofilaments but different protofilament numbers can be found in some organisms and specialized cells. The cofactor is Mg(2+).

The protein localises to the cytoplasm. It localises to the cytoskeleton. Its function is as follows. Tubulin is the major constituent of microtubules, a cylinder consisting of laterally associated linear protofilaments composed of alpha- and beta-tubulin heterodimers. Microtubules grow by the addition of GTP-tubulin dimers to the microtubule end, where a stabilizing cap forms. Below the cap, tubulin dimers are in GDP-bound state, owing to GTPase activity of alpha-tubulin. The sequence is that of Tubulin beta chain (benA56) from Aspergillus oryzae (strain ATCC 42149 / RIB 40) (Yellow koji mold).